Reading from the N-terminus, the 498-residue chain is GTPase Der (498 aa).

EngA-type G domains lie at 3-167 (PVVA…FDDL) and 210-383 (IKLA…KSAT). GTP is bound by residues 9-16 (GRPNVGKS), 57-61 (DTGGI), 119-122 (NKID), 216-223 (GRPNVGKS), 263-267 (DTAGV), and 328-331 (NKWD). The 85-residue stretch at 384–468 (TRVGTSVLTR…PIRINFQNSD (85 aa)) folds into the KH-like domain.

This sequence belongs to the TRAFAC class TrmE-Era-EngA-EngB-Septin-like GTPase superfamily. EngA (Der) GTPase family. Associates with the 50S ribosomal subunit.

Its function is as follows. GTPase that plays an essential role in the late steps of ribosome biogenesis. This chain is GTPase Der, found in Vibrio campbellii (strain ATCC BAA-1116).